The chain runs to 345 residues: Phosphoribosylformylglycinamidine cyclo-ligase (345 aa).

The protein belongs to the AIR synthase family. As to quaternary structure, homodimer.

It is found in the cytoplasm. It catalyses the reaction 2-formamido-N(1)-(5-O-phospho-beta-D-ribosyl)acetamidine + ATP = 5-amino-1-(5-phospho-beta-D-ribosyl)imidazole + ADP + phosphate + H(+). It participates in purine metabolism; IMP biosynthesis via de novo pathway; 5-amino-1-(5-phospho-D-ribosyl)imidazole from N(2)-formyl-N(1)-(5-phospho-D-ribosyl)glycinamide: step 2/2. The protein is Phosphoribosylformylglycinamidine cyclo-ligase of Escherichia coli O157:H7.